We begin with the raw amino-acid sequence, 568 residues long: Glucose-6-phosphate isomerase, cytosolic (568 aa).

Glu-360 serves as the catalytic Proton donor. Catalysis depends on residues His-391 and Lys-516.

The protein belongs to the GPI family. In terms of assembly, homodimer.

It is found in the cytoplasm. It carries out the reaction alpha-D-glucose 6-phosphate = beta-D-fructose 6-phosphate. The protein operates within carbohydrate degradation; glycolysis; D-glyceraldehyde 3-phosphate and glycerone phosphate from D-glucose: step 2/4. The polypeptide is Glucose-6-phosphate isomerase, cytosolic (PGIC) (Oenothera sinuata var. hirsuta (Mexican evening primrose)).